The following is a 158-amino-acid chain: Putative zinc-binding protein ORF9 (158 aa).

Residues 72–111 form an RING-type; degenerate zinc finger; sequence CPVCGRAVVGPTVREACGHVTCNACETEACAVDRLCIGGG. The disordered stretch occupies residues 126-158; that stretch reads GPRWRGPRPTRPEAHEAVQRSRGSSEDACTCAP. A compositionally biased stretch (basic and acidic residues) spans 135 to 150; it reads TRPEAHEAVQRSRGSS.

The chain is Putative zinc-binding protein ORF9 (ORF9) from Ictalurid herpesvirus 1 (strain Auburn) (IcHV-1).